Consider the following 320-residue polypeptide: GTP 3',8-cyclase (320 aa).

In terms of domain architecture, Radical SAM core spans 5–222 (KLSRPLKVLR…LMKKEFTFYP (218 aa)). Residue Arg-14 participates in GTP binding. Residues Cys-21, Cys-25, and Cys-28 each coordinate [4Fe-4S] cluster. Arg-65 provides a ligand contact to GTP. Gly-69 serves as a coordination point for S-adenosyl-L-methionine. Thr-96 contacts GTP. Residue Ser-120 participates in S-adenosyl-L-methionine binding. Lys-157 is a binding site for GTP. Position 191 (Met-191) interacts with S-adenosyl-L-methionine. Residues Cys-253 and Cys-256 each coordinate [4Fe-4S] cluster. 258-260 (RIR) lines the GTP pocket. Position 270 (Cys-270) interacts with [4Fe-4S] cluster.

Belongs to the radical SAM superfamily. MoaA family. As to quaternary structure, monomer and homodimer. It depends on [4Fe-4S] cluster as a cofactor.

The catalysed reaction is GTP + AH2 + S-adenosyl-L-methionine = (8S)-3',8-cyclo-7,8-dihydroguanosine 5'-triphosphate + 5'-deoxyadenosine + L-methionine + A + H(+). It functions in the pathway cofactor biosynthesis; molybdopterin biosynthesis. In terms of biological role, catalyzes the cyclization of GTP to (8S)-3',8-cyclo-7,8-dihydroguanosine 5'-triphosphate. The protein is GTP 3',8-cyclase of Aquifex aeolicus (strain VF5).